The sequence spans 203 residues: DNA-directed RNA polymerase subunit gamma (203 aa).

Residues Cys34, Cys36, Cys49, and Cys52 each contribute to the Zn(2+) site.

The protein belongs to the RNA polymerase beta' chain family. RpoC1 subfamily. In cyanobacteria the RNAP catalytic core is composed of 2 alpha, 1 beta, 1 beta', 1 gamma and 1 omega subunit. When a sigma factor is associated with the core the holoenzyme is formed, which can initiate transcription. Zn(2+) serves as cofactor.

The catalysed reaction is RNA(n) + a ribonucleoside 5'-triphosphate = RNA(n+1) + diphosphate. Functionally, DNA-dependent RNA polymerase catalyzes the transcription of DNA into RNA using the four ribonucleoside triphosphates as substrates. The protein is DNA-directed RNA polymerase subunit gamma (rpoC1) of Prochlorothrix hollandica.